A 689-amino-acid polypeptide reads, in one-letter code: UvrABC system protein C (689 aa).

Over residues Met-1 to Gly-19 the composition is skewed to polar residues. Positions Met-1 to Val-59 are disordered. A compositionally biased stretch (acidic residues) spans Glu-42–Val-59. A GIY-YIG domain is found at Thr-83–Val-161. A UVR domain is found at Arg-271–Ile-306.

Belongs to the UvrC family. Interacts with UvrB in an incision complex.

It is found in the cytoplasm. Functionally, the UvrABC repair system catalyzes the recognition and processing of DNA lesions. UvrC both incises the 5' and 3' sides of the lesion. The N-terminal half is responsible for the 3' incision and the C-terminal half is responsible for the 5' incision. The protein is UvrABC system protein C of Nitrobacter winogradskyi (strain ATCC 25391 / DSM 10237 / CIP 104748 / NCIMB 11846 / Nb-255).